The sequence spans 410 residues: Provicilin (410 aa).

Positions 1–15 (MLLAIAFLASVCVSS) are cleaved as a signal peptide. In terms of domain architecture, Cupin type-1 1 spans 23-181 (FIFKSNRFQT…AFNTNYEEIE (159 aa)). Disordered regions lie at residues 223–242 (SKNAKSSSKKSVSSESGPFN) and 312–331 (QRNENQGKENDKEEEQEEET). Positions 225–238 (NAKSSSKKSVSSES) are enriched in low complexity. Residues 241-409 (FNLRSRNPIY…AFPGSSHEVD (169 aa)) form the Cupin type-1 2 domain. A glycan (N-linked (GlcNAc...) asparagine) is linked at Asn359.

It belongs to the 7S seed storage protein family.

It localises to the vacuole. It is found in the aleurone grain. Its function is as follows. Seed storage protein. This Pisum sativum (Garden pea) protein is Provicilin.